The chain runs to 440 residues: Xylose isomerase (440 aa).

Residues Asp-307 and Asp-309 each coordinate Mg(2+).

It belongs to the xylose isomerase family. Homotetramer. It depends on Mg(2+) as a cofactor.

It is found in the cytoplasm. The enzyme catalyses alpha-D-xylose = alpha-D-xylulofuranose. The protein is Xylose isomerase of Pectobacterium carotovorum subsp. carotovorum (strain PC1).